Consider the following 681-residue polypeptide: MNAVALRVAELRRVLRHHEYKYHVEDAPEIPDIEYDKLMQELKALEADHPELVTSDSPTQRVGAAPLAAFEQVRHEVPMLSLDNVFDEESYLAFSKRIGDRLKNGDDLTFCCELKLDGLAVSLLYEEGILVQAATRGDGTTGENITSNIRTVGAIPLRLEGENIPRRVEVRGEVFMKHGGFEKLNEEARRTGSKVFANPRNAAAGSLRQLDPRITAKRPLTFFCYGVGLLEGGELPASHWERLMQFKAWGLPVSDRIKLCTGPAEVLDFYRQVEQTRSSLGFDIDGVVVKVDSLALQERLGFVARAPRWAVAFKFPAQEQLTWVRDVEFQVGRTGAITPVARLEPVAVAGVIVSNATLHNADEIERLGLQIGDRVIVRRAGDVIPQIVGIVESERPETVQPIVFPAACPVCGSDVERVEGEAVTRCTGGLICGAQRKEALKHFVSRRALDVEGMGDKIIDQLVEKEYVKTPADLFRLSAGIMTGLDRMGPKSAMNLVNALEKAKSTTLARFLYALGIRDVGESTAANLAAHFGSLETLFAADEDALLEVPDVGKIVAAHVRHFLEEEHNQTVIRELTDPAGINIYWPEVKVVNAEEIDSPFAGKTVVLTGSLSILSRDEAKDRLTALGAKVSGSVSKKTDMVIAGEAAGSKLAKAQELGIPVIDEAEMIRLLNNHGDVSTL.

NAD(+) is bound by residues 32-36, 81-82, and Glu113; these read DIEYD and SL. Lys115 (N6-AMP-lysine intermediate) is an active-site residue. NAD(+) is bound by residues Arg136, Glu173, Lys290, and Lys314. 4 residues coordinate Zn(2+): Cys408, Cys411, Cys426, and Cys432. In terms of domain architecture, BRCT spans 596 to 681; it reads EIDSPFAGKT…LNNHGDVSTL (86 aa).

This sequence belongs to the NAD-dependent DNA ligase family. LigA subfamily. Mg(2+) is required as a cofactor. Mn(2+) serves as cofactor.

It carries out the reaction NAD(+) + (deoxyribonucleotide)n-3'-hydroxyl + 5'-phospho-(deoxyribonucleotide)m = (deoxyribonucleotide)n+m + AMP + beta-nicotinamide D-nucleotide.. Its function is as follows. DNA ligase that catalyzes the formation of phosphodiester linkages between 5'-phosphoryl and 3'-hydroxyl groups in double-stranded DNA using NAD as a coenzyme and as the energy source for the reaction. It is essential for DNA replication and repair of damaged DNA. The chain is DNA ligase from Pectobacterium atrosepticum (strain SCRI 1043 / ATCC BAA-672) (Erwinia carotovora subsp. atroseptica).